We begin with the raw amino-acid sequence, 196 residues long: S-norcoclaurine synthase 2 (196 aa).

Positions 1–19 are cleaved as a signal peptide; sequence MRMEVVLVVFLMFIGTINC. 104–106 contributes to the dopamine binding site; that stretch reads YRE. The active-site Proton donor is K118. D137 is a (4-hydroxyphenyl)acetaldehyde binding site.

It belongs to the BetVI family.

It catalyses the reaction (4-hydroxyphenyl)acetaldehyde + dopamine = (S)-norcoclaurine + H2O. With respect to regulation, not inhibited by O-phenanthroline or EDTA. In terms of biological role, involved in the biosynthesis of the common precursor of all benzylisoquinoline alkaloids such as morphine, sanguinarine, codeine or berberine. Condenses dopamine and pyruvic acid or 4-hydroxyphenylpyruvate. This chain is S-norcoclaurine synthase 2 (PR10A), found in Coptis japonica (Japanese goldthread).